A 292-amino-acid polypeptide reads, in one-letter code: Ribosomal protein L11 methyltransferase (292 aa).

Residues threonine 136, glycine 159, aspartate 181, and asparagine 228 each contribute to the S-adenosyl-L-methionine site.

Belongs to the methyltransferase superfamily. PrmA family.

The protein localises to the cytoplasm. It carries out the reaction L-lysyl-[protein] + 3 S-adenosyl-L-methionine = N(6),N(6),N(6)-trimethyl-L-lysyl-[protein] + 3 S-adenosyl-L-homocysteine + 3 H(+). In terms of biological role, methylates ribosomal protein L11. The chain is Ribosomal protein L11 methyltransferase from Rhizobium etli (strain CIAT 652).